The following is a 95-amino-acid chain: Aspartyl/glutamyl-tRNA(Asn/Gln) amidotransferase subunit C (95 aa).

It belongs to the GatC family. In terms of assembly, heterotrimer of A, B and C subunits.

It catalyses the reaction L-glutamyl-tRNA(Gln) + L-glutamine + ATP + H2O = L-glutaminyl-tRNA(Gln) + L-glutamate + ADP + phosphate + H(+). The catalysed reaction is L-aspartyl-tRNA(Asn) + L-glutamine + ATP + H2O = L-asparaginyl-tRNA(Asn) + L-glutamate + ADP + phosphate + 2 H(+). Allows the formation of correctly charged Asn-tRNA(Asn) or Gln-tRNA(Gln) through the transamidation of misacylated Asp-tRNA(Asn) or Glu-tRNA(Gln) in organisms which lack either or both of asparaginyl-tRNA or glutaminyl-tRNA synthetases. The reaction takes place in the presence of glutamine and ATP through an activated phospho-Asp-tRNA(Asn) or phospho-Glu-tRNA(Gln). This chain is Aspartyl/glutamyl-tRNA(Asn/Gln) amidotransferase subunit C, found in Laribacter hongkongensis (strain HLHK9).